Reading from the N-terminus, the 92-residue chain is Small ribosomal subunit protein uS19 (92 aa).

The protein belongs to the universal ribosomal protein uS19 family.

Protein S19 forms a complex with S13 that binds strongly to the 16S ribosomal RNA. The sequence is that of Small ribosomal subunit protein uS19 from Rickettsia africae (strain ESF-5).